We begin with the raw amino-acid sequence, 640 residues long: Probable potassium transport system protein Kup 2 (640 aa).

A run of 12 helical transmembrane segments spans residues 19–39 (LFSSTTFLLALGSLGVVYGDI), 67–87 (VLSLVFWSMTMVICVKYVVFV), 118–138 (GVVAFAATLGASLLYGDGVIT), 155–175 (EAAKPLVVPLTCVVLLALFLV), 181–201 (GVIGNVFGPIMIVWFVTIAAL), 230–250 (FVGVVVLGSVVLCITGGEALY), 265–285 (WLGLAFPALLLNYFGQGALLL), 307–327 (MVCLSTIATVIASQAMISGVF), 355–375 (VYIPEVNYLLMIACLGLVLVF), 384–404 (AYGIAVTADMALTSILFFFVI), 415–435 (AVPLLVLFLFFDLSYFGANLF), and 437–457 (IFDGGWITLTIAAIVATSMIT).

This sequence belongs to the HAK/KUP transporter (TC 2.A.72) family.

It localises to the cell inner membrane. It catalyses the reaction K(+)(in) + H(+)(in) = K(+)(out) + H(+)(out). Transport of potassium into the cell. Likely operates as a K(+):H(+) symporter. The protein is Probable potassium transport system protein Kup 2 of Syntrophobacter fumaroxidans (strain DSM 10017 / MPOB).